A 473-amino-acid polypeptide reads, in one-letter code: Cannabinoid receptor 1 (473 aa).

Over 1 to 117 (MKSILDGLAD…CFMILNPSQQ (117 aa)) the chain is Extracellular. Positions 2-23 (KSILDGLADTTFRTITTDLLYV) are required for mitochondrial localization. Asparagine 78 and asparagine 84 each carry an N-linked (GlcNAc...) asparagine glycan. Residues 118 to 143 (LAIAVLSLTLGTFTVLENLLVLCVIL) traverse the membrane as a helical segment. Residues 144 to 155 (HSRSLRCRPSYH) are Cytoplasmic-facing. Residues 156–176 (FIGSLAVADLLGSVIFVYSFV) traverse the membrane as a helical segment. The Extracellular segment spans residues 177–188 (DFHVFHRKDSPN). The chain crosses the membrane as a helical span at residues 189 to 213 (VFLFKLGGVTASFTASVGSLFLTAI). Residues 214-233 (DRYISIHRPLAYKRIVTRPK) are Cytoplasmic-facing. Residues 234–256 (AVVAFCLMWTIAIVIAVLPLLGW) form a helical membrane-spanning segment. The Extracellular segment spans residues 257-274 (NCKKLQSVCSDIFPLIDE). The helical transmembrane segment at 275 to 300 (TYLMFWIGVTSVLLLFIVYAYMYILW) threads the bilayer. Residues 301–345 (KAHSHAVRMIQRGTQKSIIIHTSEDGKVQVTRPDQARMDIRLAKT) are Cytoplasmic-facing. A helical transmembrane segment spans residues 346-366 (LVLILVVLIICWGPLLAIMVY). Residues 367 to 378 (DVFGKMNKLIKT) are Extracellular-facing. A helical transmembrane segment spans residues 379–400 (VFAFCSMLCLLNSTVNPIIYAL). At 401–473 (RSKDLRHAFR…VSTDTSAEAL (73 aa)) the chain is on the cytoplasmic side. Cysteine 416 carries the S-palmitoyl cysteine lipid modification. Phosphoserine occurs at positions 426 and 430.

This sequence belongs to the G-protein coupled receptor 1 family. In terms of assembly, interacts (via C-terminus) with CNRIP1. Associates with G protein alpha subunits, including G(i) alpha-1/GNAI1, G(i) alpha-3/GNAI3 and G(o)-alpha/GNAO1; palmitoylation is important for interaction with GNAI3 and GNAO1. Palmitoylation at Cys-416 is important for recruitment at both plasma membrane and lipid rafts and association with G protein alpha subunits. Expressed in the brain, in the striatum, medial septum, descending arm of the band of Broca, the amygdaloid nucleus, the hippocampus and cortex (at protein level). High levels in the lateral striatum. In rostral brain regions, high expression levels in the dorsal lateral striatum, while in the caudal brain regions, high levels are observed in the ventral lateral striatum. Expressed in monocytes/macrophages (at protein level). Expressed in striated muscles and in vascular smooth muscles cells (at protein level).

It is found in the cell membrane. It localises to the mitochondrion outer membrane. The protein localises to the cell projection. Its subcellular location is the axon. The protein resides in the presynapse. With respect to regulation, hemopressin, a peptide derived from hemoglobin subunit alpha (HBA1 and/or HBA2), acts as an antagonist peptide: hemopressin-binding efficiently blocks cannabinoid receptor CNR1 and subsequent signaling. G-protein coupled receptor for cannabinoids, including endocannabinoids (eCBs), such as N-arachidonoylethanolamide (also called anandamide or AEA) and 2-arachidonoylglycerol (2-AG). Mediates many cannabinoid-induced effects, acting, among others, on food intake, memory loss, gastrointestinal motility, catalepsy, ambulatory activity, anxiety, chronic pain. Signaling typically involves reduction in cyclic AMP. In the hypothalamus, may have a dual effect on mitochondrial respiration depending upon the agonist dose and possibly upon the cell type. Increases respiration at low doses, while decreases respiration at high doses. At high doses, CNR1 signal transduction involves G-protein alpha-i protein activation and subsequent inhibition of mitochondrial soluble adenylate cyclase, decrease in cyclic AMP concentration, inhibition of protein kinase A (PKA)-dependent phosphorylation of specific subunits of the mitochondrial electron transport system, including NDUFS2. In the hypothalamus, inhibits leptin-induced reactive oxygen species (ROS) formation and mediates cannabinoid-induced increase in SREBF1 and FASN gene expression. In response to cannabinoids, drives the release of orexigenic beta-endorphin, but not that of melanocyte-stimulating hormone alpha/alpha-MSH, from hypothalamic POMC neurons, hence promoting food intake. In the hippocampus, regulates cellular respiration and energy production in response to cannabinoids. Involved in cannabinoid-dependent depolarization-induced suppression of inhibition (DSI), a process in which depolarization of CA1 postsynaptic pyramidal neurons mobilizes eCBs, which retrogradely activate presynaptic CB1 receptors, transiently decreasing GABAergic inhibitory neurotransmission. Also reduces excitatory synaptic transmission. In superior cervical ganglions and cerebral vascular smooth muscle cells, inhibits voltage-gated Ca(2+) channels in a constitutive, as well as agonist-dependent manner. Induces leptin production in adipocytes and reduces LRP2-mediated leptin clearance in the kidney, hence participating in hyperleptinemia. In adipose tissue, CNR1 signaling leads to increased expression of SREBF1, ACACA and FASN genes. In the liver, activation by endocannabinoids leads to increased de novo lipogenesis and reduced fatty acid catabolism, associated with increased expression of SREBF1/SREBP-1, GCK, ACACA, ACACB and FASN genes. May also affect de novo cholesterol synthesis and HDL-cholesteryl ether uptake. Peripherally modulates energy metabolism. In high carbohydrate diet-induced obesity, may decrease the expression of mitochondrial dihydrolipoyl dehydrogenase/DLD in striated muscles, as well as that of selected glucose/ pyruvate metabolic enzymes, hence affecting energy expenditure through mitochondrial metabolism. In response to cannabinoid anandamide, elicits a pro-inflammatory response in macrophages, which involves NLRP3 inflammasome activation and IL1B and IL18 secretion. In macrophages infiltrating pancreatic islets, this process may participate in the progression of type-2 diabetes and associated loss of pancreatic beta-cells. This Rattus norvegicus (Rat) protein is Cannabinoid receptor 1 (Cnr1).